The following is a 428-amino-acid chain: Histidine--tRNA ligase (428 aa).

It belongs to the class-II aminoacyl-tRNA synthetase family. Homodimer.

Its subcellular location is the cytoplasm. The enzyme catalyses tRNA(His) + L-histidine + ATP = L-histidyl-tRNA(His) + AMP + diphosphate + H(+). This Azotobacter vinelandii (strain DJ / ATCC BAA-1303) protein is Histidine--tRNA ligase.